The chain runs to 344 residues: Dihydroorotase (344 aa).

2 residues coordinate Zn(2+): H13 and H15. Substrate-binding positions include 15–17 (HLR) and N41. The Zn(2+) site is built by K98, H135, and H173. K98 bears the N6-carboxylysine mark. Residue H135 participates in substrate binding. L218 contributes to the substrate binding site. D247 is a Zn(2+) binding site. Residue D247 is part of the active site. Residues H251 and A263 each contribute to the substrate site.

Belongs to the metallo-dependent hydrolases superfamily. DHOase family. Class II DHOase subfamily. In terms of assembly, homodimer. Requires Zn(2+) as cofactor.

It catalyses the reaction (S)-dihydroorotate + H2O = N-carbamoyl-L-aspartate + H(+). It participates in pyrimidine metabolism; UMP biosynthesis via de novo pathway; (S)-dihydroorotate from bicarbonate: step 3/3. Catalyzes the reversible cyclization of carbamoyl aspartate to dihydroorotate. This chain is Dihydroorotase, found in Neisseria gonorrhoeae (strain NCCP11945).